Here is a 257-residue protein sequence, read N- to C-terminus: Zinc transporter ZupT (257 aa).

8 consecutive transmembrane segments (helical) span residues 5–25 (LILT…GVLG), 32–52 (LLAF…LMEM), 61–81 (GMSP…YLGL), 109–129 (AILL…ATFV), 137–157 (LGFG…LAVV), 171–191 (ILWA…AWLI), 195–215 (MISP…MVAL), and 236–256 (GVLC…TAGI). The Fe(2+) site is built by N120 and E123. Residues E123 and H148 each coordinate Zn(2+). The Fe(2+) site is built by N149, E152, and E181. E152 contacts Zn(2+).

Belongs to the ZIP transporter (TC 2.A.5) family. ZupT subfamily.

It localises to the cell inner membrane. It carries out the reaction Zn(2+)(in) = Zn(2+)(out). Functionally, mediates zinc uptake. May also transport other divalent cations. This is Zinc transporter ZupT from Shigella dysenteriae serotype 1 (strain Sd197).